The chain runs to 283 residues: Endochitinase At2g43620 (283 aa).

The N-terminal stretch at 1-28 (MATLRAMLKNAFILFLFTLTIMAKTVFS) is a signal peptide. A Chitin-binding type-1 domain is found at 29–66 (QQCGTTGCAANLCCSRYGYCGTTDAYCGTGCRSGPCSS). Cystine bridges form between Cys31–Cys42, Cys36–Cys48, Cys41–Cys55, and Cys59–Cys64. Positions 88 to 283 (DTIENVVTPA…GITPGANLSC (196 aa)) are catalytic. The active-site Proton donor is Glu150. An N-linked (GlcNAc...) asparagine glycan is attached at Asn280.

Belongs to the glycosyl hydrolase 19 family. Chitinase class I subfamily.

It catalyses the reaction Random endo-hydrolysis of N-acetyl-beta-D-glucosaminide (1-&gt;4)-beta-linkages in chitin and chitodextrins.. The protein is Endochitinase At2g43620 of Arabidopsis thaliana (Mouse-ear cress).